The primary structure comprises 76 residues: Protein OPG128 (76 aa).

Cysteines 17 and 21 form a disulfide.

It belongs to the orthopoxvirus OPG128 family. As to quaternary structure, interacts with sulfhydryl oxidase OPG072; this interaction involves formation of a transient disulfide-bonded intermediate, allowing disulfide bond transfer. Interacts with OPG088; this interaction involves formation of a transient disulfide-bonded intermediate, allowing disulfide bond transfer.

Functionally, late protein which probably participates in disulfide bond formation by functioning as a thiol-disulfide transfer protein between membrane-associated OPG072 and OPG08. The complete pathway for formation of disulfide bonds in intracellular virion membrane proteins sequentially involves oxidation of OPG072, OPG128 and OPG08. In Variola virus (isolate Human/India/Ind3/1967) (VARV), this protein is Protein OPG128 (OPG128).